Consider the following 289-residue polypeptide: uncharacterized protein (289 aa).

This is an uncharacterized protein from Homo sapiens (Human).